The primary structure comprises 507 residues: Maturase K (507 aa).

The protein belongs to the intron maturase 2 family. MatK subfamily.

Its subcellular location is the plastid. The protein localises to the chloroplast. In terms of biological role, usually encoded in the trnK tRNA gene intron. Probably assists in splicing its own and other chloroplast group II introns. This Lyonia lucida (Fetterbush) protein is Maturase K.